Reading from the N-terminus, the 491-residue chain is Protein nucleotidyltransferase YdiU (491 aa).

Positions 88, 90, 91, 111, 123, 124, 174, and 181 each coordinate ATP. D250 acts as the Proton acceptor in catalysis. The Mg(2+) site is built by N251 and D260. An ATP-binding site is contributed by D260. The span at 466–484 (DDQPDRADYAEPPQPEERV) shows a compositional bias: basic and acidic residues. A disordered region spans residues 466–491 (DDQPDRADYAEPPQPEERVLQTFCGT).

The protein belongs to the SELO family. Requires Mg(2+) as cofactor. Mn(2+) serves as cofactor.

It catalyses the reaction L-seryl-[protein] + ATP = 3-O-(5'-adenylyl)-L-seryl-[protein] + diphosphate. The catalysed reaction is L-threonyl-[protein] + ATP = 3-O-(5'-adenylyl)-L-threonyl-[protein] + diphosphate. The enzyme catalyses L-tyrosyl-[protein] + ATP = O-(5'-adenylyl)-L-tyrosyl-[protein] + diphosphate. It carries out the reaction L-histidyl-[protein] + UTP = N(tele)-(5'-uridylyl)-L-histidyl-[protein] + diphosphate. It catalyses the reaction L-seryl-[protein] + UTP = O-(5'-uridylyl)-L-seryl-[protein] + diphosphate. The catalysed reaction is L-tyrosyl-[protein] + UTP = O-(5'-uridylyl)-L-tyrosyl-[protein] + diphosphate. Its function is as follows. Nucleotidyltransferase involved in the post-translational modification of proteins. It can catalyze the addition of adenosine monophosphate (AMP) or uridine monophosphate (UMP) to a protein, resulting in modifications known as AMPylation and UMPylation. The polypeptide is Protein nucleotidyltransferase YdiU (Bradyrhizobium sp. (strain ORS 278)).